A 166-amino-acid chain; its full sequence is MSNNDQKRDEGYIEKLVQVNRVAKTVKGGRIFTFTALTVVGDGKGRVGFGRGKSREVPAAIQKAMEAARRNMIQVDLNGTTLQYAMKSAHGASKVYMQPASEGTGIIAGGAMRAVLEVAGVQNVLAKCYGSTNPVNVVHATFKGLKAMQSPESIAAKRGLRVEEIK.

The S5 DRBM domain occupies Y12–V75.

It belongs to the universal ribosomal protein uS5 family. In terms of assembly, part of the 30S ribosomal subunit. Contacts proteins S4 and S8.

In terms of biological role, with S4 and S12 plays an important role in translational accuracy. Functionally, located at the back of the 30S subunit body where it stabilizes the conformation of the head with respect to the body. The sequence is that of Small ribosomal subunit protein uS5 from Pseudomonas fluorescens (strain Pf0-1).